The following is a 254-amino-acid chain: Large ribosomal subunit protein uL2 (254 aa).

Belongs to the universal ribosomal protein uL2 family.

This chain is Large ribosomal subunit protein uL2 (RPL2), found in Eremothecium gossypii (strain ATCC 10895 / CBS 109.51 / FGSC 9923 / NRRL Y-1056) (Yeast).